The chain runs to 185 residues: uncharacterized protein (185 aa).

This is an uncharacterized protein from Haemophilus influenzae (strain ATCC 51907 / DSM 11121 / KW20 / Rd).